A 348-amino-acid chain; its full sequence is Alternative squalene epoxidase (348 aa).

Over residues 1-10 (MLVDRVENNE) the composition is skewed to basic and acidic residues. A disordered region spans residues 1 to 26 (MLVDRVENNEKQQQQMASSSDAMSDS). Over residues 12-26 (QQQQMASSSDAMSDS) the composition is skewed to low complexity. 3 consecutive transmembrane segments (helical) span residues 55-75 (AIAW…LLLS), 105-125 (LGLV…WIFF), and 153-173 (GLLT…YLAI). The 136-residue stretch at 197–332 (FMCLVLQDGI…FMWFDQLGGT (136 aa)) folds into the Fatty acid hydroxylase domain. A Histidine box-1 motif is present at residues 211 to 215 (HVLEH). Positions 226–230 (HKPHH) match the Histidine box-2 motif. The next 2 membrane-spanning stretches (helical) occupy residues 243–263 (GSLM…ANLV) and 277–297 (SYAC…DGIF). The Histidine box-3 signature appears at 308–312 (HHVHH).

Belongs to the sterol desaturase family. Interacts with cytochrome b5/PHATRDRAFT_30770. It depends on Fe cation as a cofactor.

The protein resides in the endoplasmic reticulum membrane. It carries out the reaction squalene + 2 Fe(II)-[cytochrome b5] + O2 + 2 H(+) = (S)-2,3-epoxysqualene + 2 Fe(III)-[cytochrome b5] + H2O. Its pathway is terpene metabolism; lanosterol biosynthesis; lanosterol from farnesyl diphosphate. With respect to regulation, the activity of this enzyme is not inhibited by terbinafine, an established inhibitor of the conventional flavoprotein squalene epoxidase. In terms of biological role, catalyzes the stereospecific epoxidation of squalene at the terminal double bond to form (S)-2,3-epoxysqualene, the first oxygenation step in sterol biosynthesis. The chain is Alternative squalene epoxidase from Phaeodactylum tricornutum (strain CCAP 1055/1).